The chain runs to 181 residues: Bradykinin potentiating and C-type natriuretic peptides (181 aa).

The N-terminal stretch at 1–23 (MFVSRLAASGLLLLALLAVSLDG) is a signal peptide. The propeptide occupies 24–27 (KPLQ). Residues Gln28 and Gln31 each carry the pyrrolidone carboxylic acid modification. A propeptide spanning residues 41-43 (LVV) is cleaved from the precursor. A Pyrrolidone carboxylic acid modification is found at Gln44. Positions 50–52 (TQL) are excised as a propeptide. A Pyrrolidone carboxylic acid modification is found at Gln53. Positions 59–159 (AGGTTALREE…ARRLKGLAKK (101 aa)) are excised as a propeptide. The tract at residues 74-150 (EAALDTPPAG…GGGCGGGGGA (77 aa)) is disordered. Positions 104–114 (SKGASATSAAS) are enriched in low complexity. A compositionally biased stretch (gly residues) spans 140 to 150 (AGGGCGGGGGA). Cys165 and Cys181 form a disulfide bridge.

This sequence in the N-terminal section; belongs to the bradykinin-potentiating peptide family. It in the C-terminal section; belongs to the natriuretic peptide family. As to expression, venom gland.

The protein localises to the secreted. Bradykinin-potentiating peptide both inhibits the activity of the angiotensin-converting enzyme (ACE) and enhances the action of bradykinin by inhibiting the peptidases that inactivate it. It acts as an indirect hypotensive agent. Synthetic Cdt1a, Cdt1b and the short hexapeptide Cdt3 are able to potentiate the hypotensive effect mediated by Bk on the blood pressure of anesthetized rats. Functionally, has a vasorelaxant activity in rat aortic strips and a diuretic potency in anesthetized rats. May act by activating natriuretic receptors (NPR1 and/or NPR2). In Crotalus durissus terrificus (South American rattlesnake), this protein is Bradykinin potentiating and C-type natriuretic peptides.